The following is a 383-amino-acid chain: Probable arabinan endo-1,5-alpha-L-arabinosidase D (383 aa).

The N-terminal stretch at Met1–Ala22 is a signal peptide. Catalysis depends on Asp49, which acts as the Proton acceptor. Residues Asn75, Asn163, and Asn206 are each glycosylated (N-linked (GlcNAc...) asparagine). Glu227 serves as the catalytic Proton donor. N-linked (GlcNAc...) asparagine glycosylation is present at Asn325. The GPI-anchor amidated asparagine moiety is linked to residue Asn356. The propeptide at Pro357 to Leu383 is removed in mature form.

The protein belongs to the glycosyl hydrolase 43 family.

The protein localises to the cell membrane. It carries out the reaction Endohydrolysis of (1-&gt;5)-alpha-arabinofuranosidic linkages in (1-&gt;5)-arabinans.. The protein operates within glycan metabolism; L-arabinan degradation. Its function is as follows. Endo-1,5-alpha-L-arabinanase involved in degradation of pectin. Its preferred substrate is linear 1,5-alpha-L-arabinan. The protein is Probable arabinan endo-1,5-alpha-L-arabinosidase D (abnD) of Emericella nidulans (strain FGSC A4 / ATCC 38163 / CBS 112.46 / NRRL 194 / M139) (Aspergillus nidulans).